The primary structure comprises 221 residues: Eukaryotic translation initiation factor 3 subunit K (221 aa).

Positions 46–207 constitute a PCI domain; the sequence is YDLEANLACL…NIKTKHITEK (162 aa).

Belongs to the eIF-3 subunit K family. In terms of assembly, component of the eukaryotic translation initiation factor 3 (eIF-3) complex.

It localises to the cytoplasm. Component of the eukaryotic translation initiation factor 3 (eIF-3) complex, which is involved in protein synthesis of a specialized repertoire of mRNAs and, together with other initiation factors, stimulates binding of mRNA and methionyl-tRNAi to the 40S ribosome. The eIF-3 complex specifically targets and initiates translation of a subset of mRNAs involved in cell proliferation. The polypeptide is Eukaryotic translation initiation factor 3 subunit K (Aedes aegypti (Yellowfever mosquito)).